Reading from the N-terminus, the 430-residue chain is Mannosylglucosylglycerate synthase (430 aa).

This sequence belongs to the glycosyltransferase group 1 family. It depends on a divalent metal cation as a cofactor.

It carries out the reaction (2R)-2-O-(alpha-D-glucopyranosyl)-glycerate + GDP-alpha-D-mannose = (2R)-2-O-[alpha-D-mannopyranosyl-(1-&gt;2)-alpha-D-glucopyranosyl]-glycerate + GDP + H(+). Involved in the biosynthesis of the compatible solute mannosylglucosylglycerate through a nonphosphorylating pathway. Catalyzes the synthesis of mannosylglucosylglycerate (MGG) from glucosylglycerate (GG) and GDP-mannose. The polypeptide is Mannosylglucosylglycerate synthase (Petrotoga mobilis (strain DSM 10674 / SJ95)).